A 926-amino-acid chain; its full sequence is Piwi-like protein Ago3 (926 aa).

The interval 1-62 (MADPGKGRGR…PSTSGVSIGG (62 aa)) is disordered. The span at 26-56 (SPSQSESQSPESTPEQSTAPSTIASATPSTS) shows a compositional bias: low complexity. In terms of domain architecture, PAZ spans 339-455 (TVLSLIKEVV…LIPELCQLTG (117 aa)). The Piwi domain maps to 620–912 (LVVAICSTKR…LSYLVGQCVH (293 aa)). Q672 contacts Mg(2+). Active-site residues include D697, E735, D767, and H901. Residue L926 participates in Mg(2+) binding.

Belongs to the argonaute family. Piwi subfamily. As to quaternary structure, interacts (when symmetrically methylated) with Papi/TDRKH. Interacts with Vasa. Mg(2+) is required as a cofactor. Post-translationally, arginine methylation is required for the interaction with Tudor domain-containing protein Papi/TDRKH. As to expression, highly expressed in the larval testis, pupal ovary and adult eggs.

It localises to the cytoplasm. In terms of biological role, endoribonuclease that plays a central role during spermatogenesis by repressing transposable elements and preventing their mobilization, which is essential for the germline integrity. Plays an essential role in meiotic differentiation of spermatocytes, germ cell differentiation and in self-renewal of spermatogonial stem cells. Its presence in oocytes suggests that it may participate in similar functions during oogenesis in females. Acts via the piRNA metabolic process, which mediates the repression of transposable elements during meiosis by forming complexes composed of piRNAs and Piwi proteins and govern the methylation and subsequent repression of transposons. Directly binds piRNAs, a class of 24 to 30 nucleotide RNAs that are generated by a Dicer-independent mechanism and are primarily derived from transposons and other repeated sequence elements. Strongly prefers a have adenine at position 10 of their guide (g10A preference). Plays a key role in the piRNA amplification loop, also named ping-pong amplification cycle: antisense piRNA-bound Siwi and sense piRNA-bound Ago3 reciprocally cleave complementary transcripts, to couple the amplification of piRNAs with the repression of transposable elements. The sequence is that of Piwi-like protein Ago3 (AGO3) from Bombyx mori (Silk moth).